A 1338-amino-acid polypeptide reads, in one-letter code: Insulin receptor substrate 2 (1338 aa).

Pro residues predominate over residues 1-12 (MASPPRHGPPGP). Disordered regions lie at residues 1–31 (MASP…NHSV) and 49–72 (VLRG…QPPR). Residues 16 to 144 (DGPNLNNNNN…WYRALTDLVS (129 aa)) form the PH domain. Over residues 19 to 28 (NLNNNNNNNN) the composition is skewed to low complexity. Positions 53–66 (PGAGGDEATAGGGS) are enriched in gly residues. The IRS-type PTB domain occupies 194–298 (YREVWQVNLK…EAMKALKELF (105 aa)). A disordered region spans residues 303-411 (RSKSQSSGSS…SHTLSGGCGG (109 aa)). Residues S306 and S346 each carry the phosphoserine modification. The residue at position 350 (T350) is a Phosphothreonine. Residues S365, S384, S388, and S391 each carry the phosphoserine modification. An Omega-N-methylarginine modification is found at R412. The disordered stretch occupies residues 428-537 (SRSMSMPVAH…PPARDGGGGG (110 aa)). The segment covering 444–453 (SPGSLSSSSG) has biased composition (low complexity). Over residues 459–471 (YPPPPGPHPPLPH) the composition is skewed to pro residues. A compositionally biased stretch (low complexity) spans 475–493 (HGPGQRPSSGSASASGSPS). At T520 the chain carries Phosphothreonine. S523 carries the post-translational modification Phosphoserine. The residue at position 527 (T527) is a Phosphothreonine. Y540 carries the post-translational modification Phosphotyrosine; by INSR. Positions 540–543 (YGYM) match the YXXM motif 1 motif. S560 carries the post-translational modification Phosphoserine; by PLK1. A Phosphoserine modification is found at S577. T579 and T580 each carry phosphothreonine. At S594 the chain carries Phosphoserine. The YXXM motif 2 signature appears at 598-601 (YTLM). Phosphoserine is present on residues S608 and S620. Phosphotyrosine; by INSR is present on residues Y653 and Y675. Short sequence motifs (YXXM motif) lie at residues 653–656 (YMPM) and 675–678 (YMPM). Phosphoserine occurs at positions 679 and 682. Over residues 703–719 (PSAGPAGPAPTSAAGRT) the composition is skewed to low complexity. A disordered region spans residues 703 to 739 (PSAGPAGPAPTSAAGRTFPASGGGYKASSPAESSPED). Phosphoserine occurs at positions 735 and 736. The short motif at 742 to 745 (YMRM) is the YXXM motif 5 element. Position 770 is a phosphoserine (S770). Position 779 is a phosphothreonine (T779). S805 is modified (phosphoserine). A YXXM motif 6 motif is present at residues 823-826 (YVLM). Phosphoserine is present on S828. The tract at residues 840–1101 (EPQATPGPSQ…KPEAARVASP (262 aa)) is disordered. A compositionally biased stretch (pro residues) spans 859–870 (TQPPHPVVPSPV). At S915 the chain carries Phosphoserine. Y919 is modified (phosphotyrosine; by INSR). Low complexity predominate over residues 938–967 (LLASAASSSSLLSASSPASSLGSGTPGTSS). S973 carries the post-translational modification Phosphoserine. Phosphotyrosine; by INSR is present on Y978. Residues 1013-1022 (PYPPLPPRPS) show a composition bias toward pro residues. Positions 1072-1075 (YTEM) match the YXXM motif 7 motif. T1082 carries the phosphothreonine modification. Residues 1083–1093 (PPQPIAAPPKP) show a composition bias toward pro residues. S1100 is subject to Phosphoserine. S1109 carries the phosphoserine; by PLK1 modification. The tract at residues 1121-1296 (LQASQPPDPH…TRSLGGLISA (176 aa)) is disordered. The span at 1150 to 1165 (ETFSSTTTVTPVSPSF) shows a compositional bias: low complexity. T1159 carries the post-translational modification Phosphothreonine. Phosphoserine occurs at positions 1162, 1174, 1176, and 1186. The segment covering 1174–1183 (SASVENVSLR) has biased composition (polar residues). Over residues 1188–1198 (GGVGVGPGGGD) the composition is skewed to gly residues. S1203 is subject to Phosphoserine. Over residues 1224–1236 (QPGGLVGCPGSGG) the composition is skewed to gly residues. Y1253 carries the phosphotyrosine; by INSR modification. The span at 1263 to 1277 (GLPPQPQPPPPPLPQ) shows a compositional bias: pro residues. K1331 is covalently cross-linked (Glycyl lysine isopeptide (Lys-Gly) (interchain with G-Cter in ubiquitin)).

As to quaternary structure, interacts with PHIP. Interacts with SH2B1; this interaction enhances leptin-induced activation of the PI3-kinase pathway. Interacts with GRB2. Interacts with PIK3R1. Interacts with DVL2; this interaction promotes the Wnt/beta-catenin signaling pathway. In terms of processing, phosphorylation fluctuates in a cell-cycle dependent manner with hyperphosphorylation during mitosis. Phosphorylated at Ser-560 and Ser-1109 by PLK1; these phosphorylations prevent the activation of the PI3K pathway upon growth factor stimulation by inhibiting the binding between IRS2 and the PI3K pathway components and increasing the level of IRS2 protein degradation. In addition, they prevent premature mitotic exit. Post-translationally, monoubiquitinated by NEDD4; leading to enhanced IGF1 signaling. During cell cycle, ubiquitination and proteasomal degradation are controlled by FZR1.

The protein localises to the cytoplasm. The protein resides in the cytosol. Signaling adapter protein that participates in the signal transduction from two prominent receptor tyrosine kinases, insulin receptor/INSR and insulin-like growth factor I receptor/IGF1R. Plays therefore an important role in development, growth, glucose homeostasis as well as lipid metabolism. Upon phosphorylation by the insulin receptor, functions as a signaling scaffold that propagates insulin action through binding to SH2 domain-containing proteins including the p85 regulatory subunit of PI3K, NCK1, NCK2, GRB2 or SHP2. Recruitment of GRB2 leads to the activation of the guanine nucleotide exchange factor SOS1 which in turn triggers the Ras/Raf/MEK/MAPK signaling cascade. Activation of the PI3K/AKT pathway is responsible for most of insulin metabolic effects in the cell, and the Ras/Raf/MEK/MAPK is involved in the regulation of gene expression and in cooperation with the PI3K pathway regulates cell growth and differentiation. Acts a positive regulator of the Wnt/beta-catenin signaling pathway through suppression of DVL2 autophagy-mediated degradation leading to cell proliferation. Plays a role in cell cycle progression by promoting a robust spindle assembly checkpoint (SAC) during M-phase. In macrophages, IL4-induced tyrosine phosphorylation of IRS2 leads to the recruitment and activation of phosphoinositide 3-kinase (PI3K). The sequence is that of Insulin receptor substrate 2 (IRS2) from Homo sapiens (Human).